The chain runs to 246 residues: Mast cell protease 4 (246 aa).

Positions 1-18 are cleaved as a signal peptide; sequence MQALLFLMALLLPSGAGA. A propeptide spans 19–20 (activation peptide); the sequence is EE. Positions 21 to 244 constitute a Peptidase S1 domain; sequence IIGGVESRPH…YVPWINRVIK (224 aa). A disulfide bond links Cys-50 and Cys-66. Residues His-65 and Asp-109 each act as charge relay system in the active site. Disulfide bonds link Cys-143–Cys-208 and Cys-174–Cys-187. Ser-202 acts as the Charge relay system in catalysis.

The protein belongs to the peptidase S1 family. Granzyme subfamily. Monomer. Interacts with iripin-2, a serine protease inhibitor from Ixodes ricinus saliva. In terms of tissue distribution, submucosal mast cells. In femoral muscle, detected in myocytes but not in mast cells.

With respect to regulation, completely inhibited by serine protease inhibitors such as chymostatin, diisopropylfluorophosphate and phenylmethylsulfonyl fluoride, but not by p-tosyl-L-phenylalanine chloromethyl ketone, p-tosyl-L-lysine chloromethyl ketone, pepstatin, E-64, EDTA or o-phenanthroline. Also inhibited by lima bean trypsin inhibitor, soy bean trypsin inhibitor and human plasma alpha1-antichymotrypsin. Its function is as follows. Has chymotrypsin-like activity. Hydrolyzes the amide bonds of synthetic substrates having Tyr and Phe residues at the P1 position. Preferentially hydrolyzes the 'Tyr-4-|-Ile-5' bond of angiotensin I and the 'Phe-20-|-Ala-21' bond of amyloid beta-protein, and is less active towards the 'Phe-8-|-His-9' bond of angiotensin I and the 'Phe-4-|-Ala-5' and 'Tyr-10-|-Glu-11' bonds of amyloid beta-protein. Involved in thrombin regulation and fibronectin processing. This Mus musculus (Mouse) protein is Mast cell protease 4 (Mcpt4).